The following is a 264-amino-acid chain: Glutamate racemase (264 aa).

Substrate-binding positions include Asp11–Ser12 and Tyr43–Gly44. The active-site Proton donor/acceptor is the Cys74. Asn75–Thr76 is a substrate binding site. The active-site Proton donor/acceptor is the Cys193. Thr194 to His195 provides a ligand contact to substrate.

This sequence belongs to the aspartate/glutamate racemases family.

The catalysed reaction is L-glutamate = D-glutamate. It functions in the pathway cell wall biogenesis; peptidoglycan biosynthesis. In terms of biological role, provides the (R)-glutamate required for cell wall biosynthesis. This chain is Glutamate racemase, found in Bifidobacterium longum (strain DJO10A).